The primary structure comprises 453 residues: UDP-glycosyltransferase 74E1 (453 aa).

UDP-alpha-D-glucose contacts are provided by residues Ser279, 332-334, 349-357, and 371-374; these read SPQ, HCGWNSTLE, and WADQ.

It belongs to the UDP-glycosyltransferase family.

This Arabidopsis thaliana (Mouse-ear cress) protein is UDP-glycosyltransferase 74E1 (UGT74E1).